Reading from the N-terminus, the 92-residue chain is Small ribosomal subunit protein uS19c (92 aa).

Belongs to the universal ribosomal protein uS19 family.

The protein resides in the plastid. Its subcellular location is the chloroplast. Protein S19 forms a complex with S13 that binds strongly to the 16S ribosomal RNA. In Coffea arabica (Arabian coffee), this protein is Small ribosomal subunit protein uS19c.